A 253-amino-acid chain; its full sequence is 5'/3'-nucleotidase SurE (253 aa).

Asp-8, Asp-9, Ser-39, and Asn-92 together coordinate a divalent metal cation.

The protein belongs to the SurE nucleotidase family. A divalent metal cation is required as a cofactor.

The protein localises to the cytoplasm. It catalyses the reaction a ribonucleoside 5'-phosphate + H2O = a ribonucleoside + phosphate. The enzyme catalyses a ribonucleoside 3'-phosphate + H2O = a ribonucleoside + phosphate. The catalysed reaction is [phosphate](n) + H2O = [phosphate](n-1) + phosphate + H(+). Nucleotidase with a broad substrate specificity as it can dephosphorylate various ribo- and deoxyribonucleoside 5'-monophosphates and ribonucleoside 3'-monophosphates with highest affinity to 3'-AMP. Also hydrolyzes polyphosphate (exopolyphosphatase activity) with the preference for short-chain-length substrates (P20-25). Might be involved in the regulation of dNTP and NTP pools, and in the turnover of 3'-mononucleotides produced by numerous intracellular RNases (T1, T2, and F) during the degradation of various RNAs. This chain is 5'/3'-nucleotidase SurE, found in Sodalis glossinidius (strain morsitans).